The primary structure comprises 1044 residues: Pre-mRNA-splicing factor ATP-dependent RNA helicase DEAH1 (1044 aa).

Residues 106-206 (EVVVEKKSSV…TLSKKEKEEA (101 aa)) form a disordered region. Basic and acidic residues predominate over residues 108 to 121 (VVEKKSSVSESRKS). Basic residues predominate over residues 122 to 132 (DKGKKRFRKKS). Residues S135 and S138 each carry the phosphoserine modification. Over residues 157–166 (EEDDGSESEE) the composition is skewed to acidic residues. Over residues 167-206 (ERVRDQKEREELEQHLKDRDTARTRKLTEQTLSKKEKEEA) the composition is skewed to basic and acidic residues. Positions 414–577 (LKAVEEHQVL…FDTAPIFSFP (164 aa)) constitute a Helicase ATP-binding domain. 427-434 (GDTGSGKT) serves as a coordination point for ATP. The short motif at 524 to 527 (DEAH) is the DEAH box element. Positions 600 to 775 (IVTILTIHVR…SVVLALKSLG (176 aa)) constitute a Helicase C-terminal domain.

Belongs to the DEAD box helicase family. DEAH subfamily. PRP2 sub-subfamily. In terms of tissue distribution, widely expressed.

It catalyses the reaction ATP + H2O = ADP + phosphate + H(+). Functionally, involved in pre-mRNA splicing. The protein is Pre-mRNA-splicing factor ATP-dependent RNA helicase DEAH1 of Arabidopsis thaliana (Mouse-ear cress).